The following is a 190-amino-acid chain: Recombination protein RecR (190 aa).

The C4-type zinc-finger motif lies at 58 to 73 (CTQCGGLSEDELCYIC). Positions 81–167 (SSLCLVESAR…HFTKIAQGVP (87 aa)) constitute a Toprim domain.

The protein belongs to the RecR family.

May play a role in DNA repair. It seems to be involved in an RecBC-independent recombinational process of DNA repair. It may act with RecF and RecO. The chain is Recombination protein RecR from Nitratiruptor sp. (strain SB155-2).